Consider the following 1023-residue polypeptide: 2-oxoglutarate dehydrogenase complex component E1 (1023 aa).

The N-terminal 40 residues, 1–40 (MFHLRTCAAKLRPLTASQTVKTFSQNRPAAARTFQQIRCY), are a transit peptide targeting the mitochondrion. At K74 the chain carries N6-succinyllysine. S100 is subject to Phosphoserine. Residues H143, D156, and D158 each contribute to the Ca(2+) site. R312 is a binding site for thiamine diphosphate. An N6-acetyllysine modification is found at K401. Residues D411, N444, and I446 each contribute to the thiamine diphosphate site. D411, N444, and I446 together coordinate Mg(2+). K534 participates in a covalent cross-link: Glycyl lysine isopeptide (Lys-Gly) (interchain with G-Cter in ubiquitin). An N6-succinyllysine modification is found at K564. Q676 contributes to the thiamine diphosphate binding site. At K970 the chain carries N6-acetyllysine.

The protein belongs to the alpha-ketoglutarate dehydrogenase family. As to quaternary structure, homodimer. The 2-oxoglutarate dehydrogenase complex is composed of OGDH (2-oxoglutarate dehydrogenase; E1), DLST (dihydrolipoamide succinyltransferase; E2), DLD (dihydrolipoamide dehydrogenase; E3), and the assembly factor KGD4. It contains multiple copies of the three enzymatic components (E1, E2 and E3). In the nucleus, the 2-oxoglutarate dehydrogenase complex associates with KAT2A. Interacts with ABHD11; this interaction maintains the functional lipoylation of the 2-oxoglutarate dehydrogenase complex. It depends on thiamine diphosphate as a cofactor. Requires Mg(2+) as cofactor.

It is found in the mitochondrion. It localises to the nucleus. It catalyses the reaction N(6)-[(R)-lipoyl]-L-lysyl-[protein] + 2-oxoglutarate + H(+) = N(6)-[(R)-S(8)-succinyldihydrolipoyl]-L-lysyl-[protein] + CO2. With respect to regulation, calcium ions and ADP stimulate, whereas ATP and NADH reduce catalytic activity. Its function is as follows. 2-oxoglutarate dehydrogenase (E1o) component of the 2-oxoglutarate dehydrogenase complex (OGDHC). Participates in the first step, rate limiting for the overall conversion of 2-oxoglutarate to succinyl-CoA and CO(2) catalyzed by the whole OGDHC. Catalyzes the irreversible decarboxylation of 2-oxoglutarate (alpha-ketoglutarate) via the thiamine diphosphate (ThDP) cofactor and subsequent transfer of the decarboxylated acyl intermediate on an oxidized dihydrolipoyl group that is covalently amidated to the E2 enzyme (dihydrolipoyllysine-residue succinyltransferase or DLST). Plays a key role in the Krebs (citric acid) cycle, which is a common pathway for oxidation of fuel molecules, including carbohydrates, fatty acids, and amino acids. Can catalyze the decarboxylation of 2-oxoadipate in vitro, but at a much lower rate than 2-oxoglutarate. Mainly active in the mitochondrion. A fraction of the 2-oxoglutarate dehydrogenase complex also localizes in the nucleus and is required for lysine succinylation of histones: associates with KAT2A on chromatin and provides succinyl-CoA to histone succinyltransferase KAT2A. The polypeptide is 2-oxoglutarate dehydrogenase complex component E1 (Homo sapiens (Human)).